Consider the following 354-residue polypeptide: MKYIDEAIIHVIAGKGGDGVAAFRREKYIPKGGPSGGDGGRGGSIYAMADRNINTLVDYRFARIHRAKNGENGQGSDRYGKSAHDIVLRMPVGTVITNEATGERVADLVQHDQKILLAKGGTGGLGNLHFKSSTNRTPRQFTLGEPGEEADLKLELKVLADVGLLGMPNAGKSTLIRAISAARPKVADYPFTTMHPALGVVRVDQNRSFVMADIPGLIEGAAEGAGLGHRFLKHLARTRLLLHVVDIAPLDEAIDPVYEAKAILEELRKYDEALYRKPRWLVLNKVDLLPENEREKICKKFIRSLRWKDKNFAISAMTGDGCKELTYAIMEFLERESMDENQERATFAEPDTSD.

The region spanning 1–159 is the Obg domain; that stretch reads MKYIDEAIIH…ADLKLELKVL (159 aa). The region spanning 160–334 is the OBG-type G domain; sequence ADVGLLGMPN…LTYAIMEFLE (175 aa). GTP-binding positions include 166 to 173, 191 to 195, 213 to 216, 284 to 287, and 315 to 317; these read GMPNAGKS, FTTMH, DIPG, NKVD, and SAM. The Mg(2+) site is built by serine 173 and threonine 193.

The protein belongs to the TRAFAC class OBG-HflX-like GTPase superfamily. OBG GTPase family. As to quaternary structure, monomer. The cofactor is Mg(2+).

Its subcellular location is the cytoplasm. An essential GTPase which binds GTP, GDP and possibly (p)ppGpp with moderate affinity, with high nucleotide exchange rates and a fairly low GTP hydrolysis rate. Plays a role in control of the cell cycle, stress response, ribosome biogenesis and in those bacteria that undergo differentiation, in morphogenesis control. The protein is GTPase Obg of Nitrosospira multiformis (strain ATCC 25196 / NCIMB 11849 / C 71).